We begin with the raw amino-acid sequence, 121 residues long: Large ribosomal subunit protein uL18 (121 aa).

Belongs to the universal ribosomal protein uL18 family. As to quaternary structure, part of the 50S ribosomal subunit; part of the 5S rRNA/L5/L18/L25 subcomplex. Contacts the 5S and 23S rRNAs.

In terms of biological role, this is one of the proteins that bind and probably mediate the attachment of the 5S RNA into the large ribosomal subunit, where it forms part of the central protuberance. The polypeptide is Large ribosomal subunit protein uL18 (Ehrlichia canis (strain Jake)).